The chain runs to 944 residues: Protein translocase subunit SecA (944 aa).

ATP is bound by residues Gln-96, 114 to 118 (GEGKT), and Asp-554.

It belongs to the SecA family. In terms of assembly, monomer and homodimer. Part of the essential Sec protein translocation apparatus which comprises SecA, SecYEG and auxiliary proteins SecDF. Other proteins may also be involved.

It is found in the cell inner membrane. The protein resides in the cytoplasm. The catalysed reaction is ATP + H2O + cellular proteinSide 1 = ADP + phosphate + cellular proteinSide 2.. Functionally, part of the Sec protein translocase complex. Interacts with the SecYEG preprotein conducting channel. Has a central role in coupling the hydrolysis of ATP to the transfer of proteins into and across the cell membrane, serving as an ATP-driven molecular motor driving the stepwise translocation of polypeptide chains across the membrane. The polypeptide is Protein translocase subunit SecA (Hydrogenobaculum sp. (strain Y04AAS1)).